The chain runs to 2089 residues: Mediator of DNA damage checkpoint protein 1 (2089 aa).

Acidic residues predominate over residues 1–19 (MEDTQAIDWDVEEEEETEQ). The segment at 1 to 22 (MEDTQAIDWDVEEEEETEQSSE) is disordered. The interaction with CHEK2 stretch occupies residues 1 to 150 (MEDTQAIDWD…SRGPLTVEET (150 aa)). Positions 2-220 (EDTQAIDWDV…PFAFNLNSDT (219 aa)) are interaction with the MRN complex. Thr4 bears the Phosphothreonine; by ATM mark. Positions 54–105 (NVVGRMPDCSVALPFPSISKQHAEIEILAWDKAPILRDCGSLNGTQILRPPK) constitute an FHA domain. Residue Ser108 is modified to Phosphoserine. Residues 145–568 (LTVEETPRVQ…PAKLLVVSLE (424 aa)) form a required for nuclear localization (NLS1) region. At Thr146 the chain carries Phosphothreonine. Ser168 is subject to Phosphoserine; by CK2. A Phosphoserine modification is found at Ser176. Disordered regions lie at residues 185-248 (RTTS…AKQS), 261-280 (DQPL…GAGN), and 286-317 (GVIL…AEVH). Phosphoserine; by CK2 is present on residues Ser196 and Ser218. Position 220 is a phosphothreonine; by CK2 (Thr220). Over residues 261–274 (DQPLVKERDNDTKV) the composition is skewed to basic and acidic residues. Ser299 is subject to Phosphoserine; by CK2. Thr301 is subject to Phosphothreonine; by CK2. Basic and acidic residues predominate over residues 306 to 317 (DSRPPGRPAEVH). Position 329 is a phosphoserine; by CK2 (Ser329). Residue Thr331 is modified to Phosphothreonine; by CK2. Ser372 carries the post-translational modification Phosphoserine. Ser376 is subject to Phosphoserine; by CK2. Residue Thr378 is modified to Phosphothreonine; by CK2. Ser394 and Ser397 each carry phosphoserine. Residue Ser402 is modified to Phosphoserine; by CK2. Phosphothreonine; by CK2 is present on Thr404. At Ser411 the chain carries Phosphoserine. Thr449 bears the Phosphothreonine mark. Ser453 carries the post-translational modification Phosphoserine; by CK2. Thr455 is subject to Phosphothreonine; by CK2. The segment at 482–515 (RAHSEKDQPPFGDSDDSVEADKSSPGIHLERSQA) is disordered. Residues Ser485, Ser495, Ser498, Ser504, Ser505, and Ser513 each carry the phosphoserine modification. Position 523 is a phosphothreonine (Thr523). At Ser590 the chain carries Phosphoserine. Lys616 is covalently cross-linked (Glycyl lysine isopeptide (Lys-Gly) (interchain with G-Cter in SUMO1); alternate). Lys616 participates in a covalent cross-link: Glycyl lysine isopeptide (Lys-Gly) (interchain with G-Cter in SUMO2); alternate. 2 disordered regions span residues 653–689 (DTLG…DNYG) and 780–1887 (SPPR…TKLN). Over residues 671 to 685 (GREREQHVGGTKDSE) the composition is skewed to basic and acidic residues. Phosphoserine is present on residues Ser780 and Ser793. Lys812 is modified (N6-acetyllysine). 4 stretches are compositionally biased toward basic and acidic residues: residues 819–844 (ETAE…ERQT), 851–862 (ELTKGKQDREQK), 868–905 (DTQR…EKQV), and 914–951 (AFER…RGEP). 2 positions are modified to phosphoserine: Ser955 and Ser998. Residues 955-965 (SQDQKGQASSP) show a composition bias toward polar residues. The segment covering 1016-1031 (KASRIRAAEKVSRGDQ) has biased composition (basic and acidic residues). At Ser1033 the chain carries Phosphoserine. Residues 1040–1051 (PTVPEAPAPPQK) show a composition bias toward pro residues. Residues Ser1068 and Ser1086 each carry the phosphoserine modification. Residues 1103–1113 (PKPKIRTRKSS) are compositionally biased toward basic residues. The span at 1129–1156 (PSTSTAQPVTPKPTSQATRSRTNRSSVK) shows a compositional bias: polar residues. Residues 1148–1610 (SRTNRSSVKT…TNRSSVKTPE (463 aa)) form an interaction with the PRKDC complex region. A Phosphothreonine modification is found at Thr1157. Residues 1169-1187 (QPSTSTDQPVTSEPTSQVT) show a composition bias toward polar residues. Thr1198 bears the Phosphothreonine mark. The span at 1210-1228 (QPSTSTDRPVTSEPTSQAT) shows a compositional bias: polar residues. Phosphoserine is present on Ser1235. Residue Thr1239 is modified to Phosphothreonine. Positions 1251 to 1268 (QPSTSTDQPVTSEPTYQA) are enriched in polar residues. Phosphothreonine occurs at positions 1280 and 1302. 2 stretches are compositionally biased toward low complexity: residues 1304–1318 (KPTS…NMSS) and 1347–1359 (TSRT…NMSS). Residues 1375 to 1391 (PSTSTEQPVTPEPTSRA) are compositionally biased toward polar residues. A phosphoserine mark is found at Ser1399 and Ser1400. The residue at position 1402 (Lys1402) is an N6-acetyllysine. Thr1403 is subject to Phosphothreonine. Residue Lys1413 forms a Glycyl lysine isopeptide (Lys-Gly) (interchain with G-Cter in SUMO1); alternate linkage. Lys1413 is covalently cross-linked (Glycyl lysine isopeptide (Lys-Gly) (interchain with G-Cter in SUMO2); alternate). 4 stretches are compositionally biased toward polar residues: residues 1416 to 1444 (PSTS…SVKT), 1456 to 1475 (QPST…QATR), 1498 to 1514 (ASAS…TSRT), and 1538 to 1555 (QPST…TSRA). Phosphothreonine occurs at positions 1425 and 1466. A Phosphothreonine modification is found at Thr1548. Ser1564 is subject to Phosphoserine. A phosphothreonine mark is found at Thr1567 and Thr1589. Residues 1579–1596 (QPSTSRNQLVTPEPTSRA) are compositionally biased toward polar residues. Ser1604 bears the Phosphoserine mark. Phosphothreonine is present on Thr1608. Residues 1611–1620 (PVVPTAPEPH) show a composition bias toward pro residues. Residues 1624-1636 (STDQPVTPKLTSR) show a composition bias toward polar residues. 3 positions are modified to phosphothreonine: Thr1630, Thr1664, and Thr1671. The span at 1678 to 1689 (GGQSKTLRSSTV) shows a compositional bias: polar residues. At Ser1681 the chain carries Phosphoserine. The residue at position 1697 (Thr1697) is a Phosphothreonine. Positions 1698-1719 (PEFQSPVTTDQPISPEPITQPS) are enriched in polar residues. The interval 1698 to 2089 (PEFQSPVTTD…VLSPLEMSST (392 aa)) is required for nuclear localization (NLS2). A phosphoserine mark is found at Ser1702 and Ser1711. Lys1740 participates in a covalent cross-link: Glycyl lysine isopeptide (Lys-Gly) (interchain with G-Cter in SUMO2). Residue Ser1775 is modified to Phosphoserine. Residue Lys1790 forms a Glycyl lysine isopeptide (Lys-Gly) (interchain with G-Cter in SUMO2) linkage. The residue at position 1800 (Thr1800) is a Phosphothreonine. At Ser1820 the chain carries Phosphoserine. Positions 1823–1836 (HQKQPQRGEVSQKT) are enriched in polar residues. Lys1840 is covalently cross-linked (Glycyl lysine isopeptide (Lys-Gly) (interchain with G-Cter in SUMO1); alternate). Lys1840 participates in a covalent cross-link: Glycyl lysine isopeptide (Lys-Gly) (interchain with G-Cter in SUMO2); alternate. Residues 1847-1857 (AEKPGKEEDVV) are compositionally biased toward basic and acidic residues. The residue at position 1858 (Thr1858) is a Phosphothreonine. 2 BRCT domains span residues 1892-1970 (APKV…EYVV) and 1991-2082 (RERR…FVLS). Omega-N-methylarginine is present on Arg1943.

In terms of assembly, homodimer. Interacts with H2AX, which requires phosphorylation of H2AX on 'Ser-139'. Interacts with the MRN complex, composed of MRE11, RAD50, and NBN. Interacts with CHEK2, which requires ATM-mediated phosphorylation of 'Thr-68' within the FHA domain of CHEK2. Interacts constitutively with the BRCA1-BARD1 complex, SMC1A and TP53BP1. Interacts with ATM and FANCD2, and these interactions are reduced upon DNA damage. Also interacts with the PRKDC complex, composed of XRCC6/KU70, XRCC5/KU80 and PRKDC/XRCC7. This interaction may be required for PRKDC autophosphorylation, which is essential for DNA double strand break (DSB) repair. When phosphorylated by ATM, interacts with RNF8 (via FHA domain). Interacts with CEP164. When phosphorylated, interacts with APTX (via FHA-like domain). Interacts (when phosphorylated) with TOPBP1; promoting TOPBP1 localization to DNA damage sites during mitosis. Interacts (when phosphorylated) with NBN; promoting NBN and MRN complex localization to DNA damage sites. In terms of processing, phosphorylated upon exposure to ionizing radiation (IR), ultraviolet radiation (UV), and hydroxyurea (HU). Phosphorylation in response to IR requires ATM, NBN, and possibly CHEK2. Also phosphorylated during the G2/M phase of the cell cycle and during activation of the mitotic spindle checkpoint. Phosphorylation at Thr-4 by ATM stabilizes and enhances homodimerization via the FHA domain. Phosphorylated at Ser-168 and Ser-196 by CK2 in response to DNA damage during mitosis, promoting interaction with TOPBP1. Phosphorylated by CK2 in response to DNA damage, promoting interaction with NBN and recruitment of the MRN complex to DNA damage sites. Sumoylation at Lys-1840 by PIAS4 following DNA damage promotes ubiquitin-mediated degradation. Post-translationally, ubiquitinated by RNF4, leading to proteasomal degradation; undergoes 'Lys-48'-linked polyubiquitination. Highly expressed in testis.

Its subcellular location is the nucleus. It localises to the chromosome. Functionally, histone reader protein required for checkpoint-mediated cell cycle arrest in response to DNA damage within both the S phase and G2/M phases of the cell cycle. Specifically recognizes and binds histone H2AX phosphorylated at 'Ser-139', a marker of DNA damage, serving as a scaffold for the recruitment of DNA repair and signal transduction proteins to discrete foci of DNA damage sites. Also required for downstream events subsequent to the recruitment of these proteins. These include phosphorylation and activation of the ATM, CHEK1 and CHEK2 kinases, and stabilization of TP53/p53 and apoptosis. ATM and CHEK2 may also be activated independently by a parallel pathway mediated by TP53BP1. Required for chromosomal stability during mitosis by promoting recruitment of TOPBP1 to DNA double strand breaks (DSBs): TOPBP1 forms filamentous assemblies that bridge MDC1 and tether broken chromosomes during mitosis. Required for the repair of DSBs via homologous recombination by promoting recruitment of NBN component of the MRN complex to DSBs. The chain is Mediator of DNA damage checkpoint protein 1 from Homo sapiens (Human).